A 675-amino-acid chain; its full sequence is Putative L-type lectin-domain containing receptor kinase I.11 (675 aa).

The signal sequence occupies residues 1 to 22; that stretch reads MASERLHLILLVFFNHLTFLLS. Over 23–292 the chain is Extracellular; that stretch reads QQEEAGFIYN…PKAKQEQTSP (270 aa). The legume-lectin like stretch occupies residues 27 to 263; that stretch reads AGFIYNGFGQ…YQYILGWSFS (237 aa). N-linked (GlcNAc...) asparagine glycans are attached at residues Asn60, Asn129, Asn186, Asn209, and Asn230. Residues 293–313 traverse the membrane as a helical segment; the sequence is LLIVLLMLLVLIMLAVLGGIY. Residues 314 to 675 are Cytoplasmic-facing; that stretch reads LYRRKKYAEV…THTITYGDGR (362 aa). The Protein kinase domain maps to 348–620; sequence FDKDGRLGKG…QVIQYINQNL (273 aa). ATP is bound by residues 354-362 and Lys376; that span reads LGKGGFGEV. The active-site Proton acceptor is the Asp472.

In the C-terminal section; belongs to the protein kinase superfamily. Ser/Thr protein kinase family. It in the N-terminal section; belongs to the leguminous lectin family.

The protein resides in the cell membrane. The catalysed reaction is L-seryl-[protein] + ATP = O-phospho-L-seryl-[protein] + ADP + H(+). It catalyses the reaction L-threonyl-[protein] + ATP = O-phospho-L-threonyl-[protein] + ADP + H(+). This is Putative L-type lectin-domain containing receptor kinase I.11 (LECRK111) from Arabidopsis thaliana (Mouse-ear cress).